The sequence spans 1171 residues: Putative tricorn protease homolog 2 (1171 aa).

Residues A432–G498 form a disordered region. Composition is skewed to low complexity over residues A444–A456 and I466–G498. Catalysis depends on H827, which acts as the Charge relay system. Residues Y842 to E941 are PDZ-like. A1002–G1004 is a binding site for substrate. The active-site Nucleophile is S1051. G1079–T1081 is a binding site for substrate. The active-site Charge relay system is the E1109. The tract at residues P1149–E1171 is disordered. A compositionally biased stretch (basic and acidic residues) spans V1159–E1171.

Belongs to the peptidase S41B family.

The protein localises to the cytoplasm. Functionally, degrades oligopeptides in a sequential manner. The polypeptide is Putative tricorn protease homolog 2 (tri2) (Streptomyces coelicolor (strain ATCC BAA-471 / A3(2) / M145)).